Reading from the N-terminus, the 732-residue chain is ATP-dependent RNA helicase DBP7 (732 aa).

The interval 1-91 (MIEDDGMLLN…QSNNESVKDV (91 aa)) is disordered. Basic and acidic residues-rich tracts occupy residues 42 to 56 (MMME…KTFE) and 64 to 75 (DTNKKPKSDSSG). Residues 76 to 86 (RKSYNQQSNNE) are compositionally biased toward polar residues. The Q motif motif lies at 144 to 173 (DNFDSLKIEQQLVNHLNEKMRIQKPTSIQK). The Helicase ATP-binding domain maps to 178 to 372 (QLLSSKNNDL…NVALQNYKMI (195 aa)). 191–198 (AQTGSGKT) contacts ATP. The DEAD box signature appears at 307 to 310 (DEAD). A Helicase C-terminal domain is found at 420–599 (QKKKKLDYVS…KLVNYTNDLL (180 aa)). The tract at residues 692 to 711 (MGLQNTKNGGEAKKNSKESA) is disordered. Residues 701–711 (GEAKKNSKESA) show a composition bias toward basic and acidic residues.

Belongs to the DEAD box helicase family. DDX31/DBP7 subfamily.

The protein localises to the nucleus. Its subcellular location is the nucleolus. The catalysed reaction is ATP + H2O = ADP + phosphate + H(+). In terms of biological role, ATP-binding RNA helicase involved in the biogenesis of 60S ribosomal subunits and is required for the normal formation of 25S and 5.8S rRNAs. This chain is ATP-dependent RNA helicase DBP7 (DBP7), found in Vanderwaltozyma polyspora (strain ATCC 22028 / DSM 70294 / BCRC 21397 / CBS 2163 / NBRC 10782 / NRRL Y-8283 / UCD 57-17) (Kluyveromyces polysporus).